The primary structure comprises 514 residues: MQKAGCRLEHPSATKFRNHVMEGDWDKAENDLNELKPLVHSPHAIVVRGALEISQTLLGIIVRMKFLLLQQKYLEYLEDGKVLEALQVLRCELTPLKYNTERIHVLSGYLMCSHAEDLRAKAEWEGKGAASRSKLLDKLQTYLPPSVMLPPRRLQTLLRQAVELQRDRCLYHNTKLDNNLDSVSLLIDHVCSRRQFPCYTQQILTEHCNEVWFCKFSNDGTKLATGSKDTTVIVWQVDADTHLLKLLKTLEGHAYGVSYIAWSPDDSYLVACGPDDCSELWLWNVQTGELRTKMSQSHEDSLTSVAWNPDGKRFVTGGQRGQFYQCDLDGNLLDSWEGVRVQCLWCLSDGKTVLASDTHQRIRGYNFEDLTDRNIVQEDHPIMSFTISKNGRLALLNVATQGVHLWDLQDRVLVRKYQGVTQGFYTIHSCFGGHNEDFIASGSEDHKVYIWHKRSELPIAELTGHTRTVNCVSWNPQIPSMMASASDDGTVRIWGPAPFIDHQNIEEECSSMDS.

In terms of domain architecture, CTLH spans 9–84 (EHPSATKFRN…EYLEDGKVLE (76 aa)). 6 WD repeats span residues 206–245 (EHCN…HLLK), 252–291 (GHAY…GELR), 297–337 (SHED…DSWE), 377–416 (QEDH…LVRK), 419–461 (GVTQ…PIAE), and 464–504 (GHTR…DHQN).

As to quaternary structure, forms homooligomers. Identified in the CTLH complex that contains GID4, RANBP9 and/or RANBP10, MKLN1, MAEA, RMND5A (or alternatively its paralog RMND5B), GID8, ARMC8, WDR26 and YPEL5. Within this complex, MAEA, RMND5A (or alternatively its paralog RMND5B), GID8, WDR26, and RANBP9 and/or RANBP10 form the catalytic core, while GID4, MKLN1, ARMC8 and YPEL5 have ancillary roles. Interacts with DDB1-CUL4A/B E3 ligase complexes. Forms a complex composed of at least WDR26, a G-beta:gamma unit, and PLCB2. Interacts with AXIN1.

Its subcellular location is the cytoplasm. The protein resides in the nucleus. It localises to the mitochondrion. Functionally, G-beta-like protein involved in cell signal transduction. Acts as a negative regulator in MAPK signaling pathway. Functions as a scaffolding protein to promote G beta:gamma-mediated PLCB2 plasma membrane translocation and subsequent activation in leukocytes. Core component of the CTLH E3 ubiquitin-protein ligase complex that selectively accepts ubiquitin from UBE2H and mediates ubiquitination and subsequent proteasomal degradation of the transcription factor HBP1. Acts as a negative regulator of the canonical Wnt signaling pathway through preventing ubiquitination of beta-catenin CTNNB1 by the beta-catenin destruction complex, thus negatively regulating CTNNB1 degradation. Protects cells from oxidative stress-induced apoptosis via the down-regulation of AP-1 transcriptional activity as well as by inhibiting cytochrome c release from mitochondria. Also protects cells by promoting hypoxia-mediated autophagy and mitophagy. The chain is WD repeat-containing protein 26 (Wdr26) from Rattus norvegicus (Rat).